A 393-amino-acid chain; its full sequence is Digeranylgeranylglycerophospholipid reductase (393 aa).

Ala13, Asp32, Cys43, Ala44, Gly46, Arg95, Val119, Asp274, and Gly286 together coordinate FAD. A 2,3-bis-O-(geranylgeranyl)-sn-glycerol 1-phospholipid contacts are provided by Lys327 and Gly363.

This sequence belongs to the geranylgeranyl reductase family. DGGGPL reductase subfamily. Requires FAD as cofactor.

It catalyses the reaction a 2,3-bis-O-phytanyl-sn-glycerol 1-phospholipid + 8 A = a 2,3-bis-O-(geranylgeranyl)-sn-glycerol 1-phospholipid + 8 AH2. The catalysed reaction is 2,3-bis-O-(phytanyl)-sn-glycerol 1-phosphate + 8 A = 2,3-bis-O-(geranylgeranyl)-sn-glycerol 1-phosphate + 8 AH2. It carries out the reaction CDP-2,3-bis-O-(geranylgeranyl)-sn-glycerol + 8 AH2 = CDP-2,3-bis-O-(phytanyl)-sn-glycerol + 8 A. The enzyme catalyses archaetidylserine + 8 AH2 = 2,3-bis-O-phytanyl-sn-glycero-3-phospho-L-serine + 8 A. The protein operates within membrane lipid metabolism; glycerophospholipid metabolism. Its function is as follows. Is involved in the reduction of 2,3-digeranylgeranylglycerophospholipids (unsaturated archaeols) into 2,3-diphytanylglycerophospholipids (saturated archaeols) in the biosynthesis of archaeal membrane lipids. Catalyzes the formation of archaetidic acid (2,3-di-O-phytanyl-sn-glyceryl phosphate) from 2,3-di-O-geranylgeranylglyceryl phosphate (DGGGP) via the hydrogenation of each double bond of the isoprenoid chains. Is also probably able to reduce double bonds of geranyl groups in CDP-2,3-bis-O-(geranylgeranyl)-sn-glycerol and archaetidylserine, thus acting at various stages in the biosynthesis of archaeal membrane lipids. The sequence is that of Digeranylgeranylglycerophospholipid reductase from Pyrococcus furiosus (strain ATCC 43587 / DSM 3638 / JCM 8422 / Vc1).